Consider the following 111-residue polypeptide: Ribonuclease P protein component (111 aa).

It belongs to the RnpA family. As to quaternary structure, consists of a catalytic RNA component (M1 or rnpB) and a protein subunit.

It catalyses the reaction Endonucleolytic cleavage of RNA, removing 5'-extranucleotides from tRNA precursor.. In terms of biological role, RNaseP catalyzes the removal of the 5'-leader sequence from pre-tRNA to produce the mature 5'-terminus. It can also cleave other RNA substrates such as 4.5S RNA. The protein component plays an auxiliary but essential role in vivo by binding to the 5'-leader sequence and broadening the substrate specificity of the ribozyme. The chain is Ribonuclease P protein component from Clostridium botulinum (strain Okra / Type B1).